Reading from the N-terminus, the 140-residue chain is Organic hydroperoxide resistance protein-like (140 aa).

Belongs to the OsmC/Ohr family.

The protein is Organic hydroperoxide resistance protein-like of Staphylococcus aureus (strain bovine RF122 / ET3-1).